A 610-amino-acid polypeptide reads, in one-letter code: UvrABC system protein C (610 aa).

In terms of domain architecture, GIY-YIG spans S16–V94. One can recognise a UVR domain in the interval D204–V239.

It belongs to the UvrC family. Interacts with UvrB in an incision complex.

It is found in the cytoplasm. The UvrABC repair system catalyzes the recognition and processing of DNA lesions. UvrC both incises the 5' and 3' sides of the lesion. The N-terminal half is responsible for the 3' incision and the C-terminal half is responsible for the 5' incision. In Salmonella heidelberg (strain SL476), this protein is UvrABC system protein C.